Consider the following 472-residue polypeptide: 3-isopropylmalate dehydratase large subunit (472 aa).

Residues cysteine 349, cysteine 409, and cysteine 412 each coordinate [4Fe-4S] cluster.

Belongs to the aconitase/IPM isomerase family. LeuC type 1 subfamily. Heterodimer of LeuC and LeuD. The cofactor is [4Fe-4S] cluster.

It carries out the reaction (2R,3S)-3-isopropylmalate = (2S)-2-isopropylmalate. Its pathway is amino-acid biosynthesis; L-leucine biosynthesis; L-leucine from 3-methyl-2-oxobutanoate: step 2/4. In terms of biological role, catalyzes the isomerization between 2-isopropylmalate and 3-isopropylmalate, via the formation of 2-isopropylmaleate. This is 3-isopropylmalate dehydratase large subunit from Rhodospirillum rubrum (strain ATCC 11170 / ATH 1.1.1 / DSM 467 / LMG 4362 / NCIMB 8255 / S1).